The chain runs to 489 residues: Threonine/serine exporter (489 aa).

10 helical membrane-spanning segments follow: residues 151–171 (GFPVALLGWAMMGGAVAVLLG), 174–194 (WQVSLIAFITAFTIIATTSFL), 206–226 (VVGGFIATLPASIAYSLALQF), 233–253 (SQIIASGIVVLLAGLTLVQSL), 268–288 (FFETLLFTGGIVAGVGLGIQL), 314–334 (IIAGGVTAAAFAVGCYAEWSS), 335–355 (VIIAGLTALMGSAFYYLFVVY), 356–376 (LGPVSAAAIAATAVGFTGGLL), 381–401 (LIPPLIVAIAGITPMLPGLAI), and 420–440 (IAVALATASSLAAGVVLGEWI). The interval 464–489 (FQEEAEQNQRRQRKRPKTNQRFGNKR) is disordered. Positions 473–489 (RRQRKRPKTNQRFGNKR) are enriched in basic residues.

This sequence belongs to the ThrE exporter (TC 2.A.79) family.

It is found in the cell membrane. It carries out the reaction L-threonine(in) + H(+)(out) = L-threonine(out) + H(+)(in). Its activity is regulated as follows. Transport is inhibited by the proton ionophore carbonyl cyanide m-chlorophenylhydrazone (CCCP). Its function is as follows. Catalyzes the export of L-threonine and L-serine from the cell to the extracellular environment. Export is dependent on the proton motive force. In Corynebacterium glutamicum (Brevibacterium saccharolyticum), this protein is Threonine/serine exporter.